The chain runs to 324 residues: NADH-cytochrome b5 reductase 2 (324 aa).

The helical transmembrane segment at 31–47 (IPLIGGITLAAGAGYYY) threads the bilayer. Residues 70-178 (QGWIGLKLAH…KGPLPKYPWE (109 aa)) enclose the FAD-binding FR-type domain. An FAD-binding site is contributed by 181–216 (KHDHICLIAGGTGITPMYQLVRKIFSNPEDKTKVTL).

The protein belongs to the flavoprotein pyridine nucleotide cytochrome reductase family. FAD serves as cofactor.

The protein localises to the mitochondrion outer membrane. It carries out the reaction 2 Fe(III)-[cytochrome b5] + NADH = 2 Fe(II)-[cytochrome b5] + NAD(+) + H(+). In terms of biological role, may mediate the reduction of outer membrane cytochrome b5. This Ajellomyces capsulatus (strain NAm1 / WU24) (Darling's disease fungus) protein is NADH-cytochrome b5 reductase 2 (MCR1).